The chain runs to 277 residues: 3-methyl-2-oxobutanoate hydroxymethyltransferase (277 aa).

2 residues coordinate Mg(2+): aspartate 53 and aspartate 96. 3-methyl-2-oxobutanoate-binding positions include 53–54, aspartate 96, and lysine 126; that span reads DS. Glutamate 128 contributes to the Mg(2+) binding site. The Proton acceptor role is filled by glutamate 195.

It belongs to the PanB family. In terms of assembly, homodecamer; pentamer of dimers. Mg(2+) is required as a cofactor.

The protein localises to the cytoplasm. The catalysed reaction is 3-methyl-2-oxobutanoate + (6R)-5,10-methylene-5,6,7,8-tetrahydrofolate + H2O = 2-dehydropantoate + (6S)-5,6,7,8-tetrahydrofolate. It functions in the pathway cofactor biosynthesis; (R)-pantothenate biosynthesis; (R)-pantoate from 3-methyl-2-oxobutanoate: step 1/2. Its function is as follows. Catalyzes the reversible reaction in which hydroxymethyl group from 5,10-methylenetetrahydrofolate is transferred onto alpha-ketoisovalerate to form ketopantoate. This is 3-methyl-2-oxobutanoate hydroxymethyltransferase from Chlorobaculum parvum (strain DSM 263 / NCIMB 8327) (Chlorobium vibrioforme subsp. thiosulfatophilum).